We begin with the raw amino-acid sequence, 253 residues long: Phosphate import ATP-binding protein PstB (253 aa).

Positions 7-249 constitute an ABC transporter domain; the sequence is ASAKNLNLWY…PQSSKTKRYI (243 aa). Residue 39 to 46 participates in ATP binding; sequence GPSGCGKS.

Belongs to the ABC transporter superfamily. Phosphate importer (TC 3.A.1.7) family. In terms of assembly, the complex is composed of two ATP-binding proteins (PstB), two transmembrane proteins (PstC and PstA) and a solute-binding protein (PstS).

The protein resides in the cell inner membrane. The enzyme catalyses phosphate(out) + ATP + H2O = ADP + 2 phosphate(in) + H(+). Functionally, part of the ABC transporter complex PstSACB involved in phosphate import. Responsible for energy coupling to the transport system. This chain is Phosphate import ATP-binding protein PstB, found in Ehrlichia ruminantium (strain Gardel).